The chain runs to 159 residues: Ribosomal RNA large subunit methyltransferase H (159 aa).

S-adenosyl-L-methionine is bound by residues Leu76, Gly108, and 127–132 (FGRMTY).

It belongs to the RNA methyltransferase RlmH family. Homodimer.

The protein resides in the cytoplasm. It carries out the reaction pseudouridine(1915) in 23S rRNA + S-adenosyl-L-methionine = N(3)-methylpseudouridine(1915) in 23S rRNA + S-adenosyl-L-homocysteine + H(+). Specifically methylates the pseudouridine at position 1915 (m3Psi1915) in 23S rRNA. In Carboxydothermus hydrogenoformans (strain ATCC BAA-161 / DSM 6008 / Z-2901), this protein is Ribosomal RNA large subunit methyltransferase H.